The primary structure comprises 210 residues: Protein-methionine-sulfoxide reductase heme-binding subunit MsrQ (210 aa).

Transmembrane regions (helical) follow at residues 8–28 (LAVF…AWIF), 37–57 (VLVE…LSMT), 75–95 (LGLW…LFIL), 110–130 (PYII…VTSN), 147–167 (IIYV…RADL), and 169–189 (EWAL…PVFA).

Belongs to the MsrQ family. Heterodimer of a catalytic subunit (MsrP) and a heme-binding subunit (MsrQ). FMN is required as a cofactor. Heme b serves as cofactor.

It is found in the cell inner membrane. In terms of biological role, part of the MsrPQ system that repairs oxidized periplasmic proteins containing methionine sulfoxide residues (Met-O), using respiratory chain electrons. Thus protects these proteins from oxidative-stress damage caused by reactive species of oxygen and chlorine generated by the host defense mechanisms. MsrPQ is essential for the maintenance of envelope integrity under bleach stress, rescuing a wide series of structurally unrelated periplasmic proteins from methionine oxidation. MsrQ provides electrons for reduction to the reductase catalytic subunit MsrP, using the quinone pool of the respiratory chain. The polypeptide is Protein-methionine-sulfoxide reductase heme-binding subunit MsrQ (Pseudomonas syringae pv. syringae (strain B728a)).